Here is a 577-residue protein sequence, read N- to C-terminus: Peroxynitrite isomerase THAP4 (577 aa).

Residues 1–85 form a THAP-type zinc finger; the sequence is MVICCAAVNC…LKPTAVPSIF (85 aa). Positions 84–221 are disordered; the sequence is IFHLTEKKRG…DKSGISMDDF (138 aa). A compositionally biased stretch (low complexity) spans 157–170; sequence AAQEAASQEQAQQA. S163 carries the phosphoserine modification. An HCFC1-binding motif (HBM) motif is present at residues 235-238; it reads LHSY. S239 carries the phosphoserine modification. The tract at residues 240–324 is disordered; that stretch reads FSSKHTRERP…AVQSEHSDAS (85 aa). Basic and acidic residues predominate over residues 247-266; sequence ERPSVPREPIDRKRLKKDVE. Low complexity predominate over residues 290–300; that stretch reads TATPQKPSQSP. The tract at residues 415–577 is nitrobindin; the sequence is PPKMNPVVEP…LHVTYKKVTP (163 aa). Residues T444 and H567 each contribute to the heme b site.

This sequence in the C-terminal section; belongs to the nitrobindin family. As to quaternary structure, homodimer. Heme b serves as cofactor.

It is found in the cytoplasm. Its subcellular location is the nucleus. The enzyme catalyses peroxynitrite = nitrate. It participates in nitrogen metabolism. Functionally, heme-binding protein able to scavenge peroxynitrite and to protect free L-tyrosine against peroxynitrite-mediated nitration, by acting as a peroxynitrite isomerase that converts peroxynitrite to nitrate. Therefore, this protein likely plays a role in peroxynitrite sensing and in the detoxification of reactive nitrogen and oxygen species (RNS and ROS, respectively). Is able to bind nitric oxide (NO) in vitro, but may act as a sensor of peroxynitrite levels in vivo, possibly modulating the transcriptional activity residing in the N-terminal region. The polypeptide is Peroxynitrite isomerase THAP4 (Homo sapiens (Human)).